The following is a 612-amino-acid chain: Apoptosis-inducing factor 1, mitochondrial (612 aa).

2 short sequence motifs (mitochondrial localization signal) span residues 1–30 and 62–88; these read MFRC…PKQR and KMDN…KTIK. The N-terminal 53 residues, 1 to 53, are a transit peptide targeting the mitochondrion; sequence MFRCGGLAGAFKQKLVPLVRSVCVQRPKQRNRLPGNLFQQWRVPLELQMARQM. 2 propeptides (removed in mature form) span residues 54–100 and 55–101; these read ASSG…RIMG and SSGP…IMGL. K108 carries the N6-succinyllysine modification. At S115 the chain carries Phosphoserine. Residues 133–482 form an FAD-dependent oxidoreductase region; that stretch reads FLLIGGGTAA…KPYWHQSMFW (350 aa). FAD contacts are provided by residues 137 to 141, 163 to 164, R171, and K176; these read GGGTA and ED. NAD(+) is bound at residue W195. V232 contacts FAD. A Glycyl lysine isopeptide (Lys-Gly) (interchain with G-Cter in ubiquitin) cross-link involves residue K254. A Phosphoserine modification is found at S267. R284 contributes to the FAD binding site. NAD(+) contacts are provided by residues 307-310, E335, and K341; that span reads GGFL. S370 carries the post-translational modification Phosphoserine. The residue at position 387 (K387) is an N6-acetyllysine. G398 provides a ligand contact to NAD(+). D437 serves as a coordination point for FAD. Positions 445 to 450 match the Nuclear localization signal motif; it reads KLGRRR. Residues 452 to 453, W482, and E492 contribute to the NAD(+) site; that span reads EH. FAD is bound by residues 453–454 and W482; that span reads HH. Positions 512–528 are enriched in polar residues; that stretch reads AQDNPKSATEQSGTGIR. The interval 512 to 551 is disordered; it reads AQDNPKSATEQSGTGIRSESETESEASEITIPPSDPAVPQ. Residue T520 is modified to Phosphothreonine. Phosphoserine is present on residues S523 and S529. N582 contacts NAD(+). K592 is subject to N6-acetyllysine.

This sequence belongs to the FAD-dependent oxidoreductase family. In terms of assembly, monomer (oxidized form). Homodimer (reduced form). Upon reduction with NADH, undergoes dimerization and forms tight, long-lived FADH2-NAD charge transfer complexes (CTC) resistant to oxidation. Also dimerizes with isoform 3 preventing its release from mitochondria. Interacts with XIAP/BIRC4. Interacts (via N-terminus) with EIF3G (via C-terminus). Interacts with PRELID1. Interacts with CHCHD4; the interaction increases in presence of NADH. Interacts with processed form of PARP1 (Poly [ADP-ribose] polymerase 1, processed C-terminus); interaction is mediated with poly-ADP-ribose chains attached to PARP1, promoting translocation into the nucleus. FAD serves as cofactor. Post-translationally, under normal conditions, a 54-residue N-terminal segment is first proteolytically removed during or just after translocation into the mitochondrial intermembrane space (IMS) by the mitochondrial processing peptidase (MPP) to form the inner-membrane-anchored mature form (AIFmit). During apoptosis, it is further proteolytically processed at amino-acid position 101 leading to the generation of the mature form, which is confined to the mitochondrial IMS in a soluble form (AIFsol). AIFsol is released to the cytoplasm in response to specific death signals, and translocated to the nucleus, where it induces nuclear apoptosis in a caspase-independent manner. Ubiquitination by XIAP/BIRC4 does not lead to proteasomal degradation. Ubiquitination at Lys-254 by XIAP/BIRC4 blocks its ability to bind DNA and induce chromatin degradation, thereby inhibiting its ability to induce cell death.

The protein resides in the mitochondrion intermembrane space. It localises to the mitochondrion inner membrane. It is found in the cytoplasm. The protein localises to the nucleus. Its subcellular location is the perinuclear region. The catalysed reaction is A + NADH + H(+) = AH2 + NAD(+). Functions both as NADH oxidoreductase and as regulator of apoptosis. In response to apoptotic stimuli, it is released from the mitochondrion intermembrane space into the cytosol and to the nucleus, where it functions as a proapoptotic factor in a caspase-independent pathway. Release into the cytoplasm is mediated upon binding to poly-ADP-ribose chains. The soluble form (AIFsol) found in the nucleus induces 'parthanatos' i.e. caspase-independent fragmentation of chromosomal DNA. Binds to DNA in a sequence-independent manner. Interacts with EIF3G, and thereby inhibits the EIF3 machinery and protein synthesis, and activates caspase-7 to amplify apoptosis. Plays a critical role in caspase-independent, pyknotic cell death in hydrogen peroxide-exposed cells. In contrast, participates in normal mitochondrial metabolism. Plays an important role in the regulation of respiratory chain biogenesis by interacting with CHCHD4 and controlling CHCHD4 mitochondrial import. This Rattus norvegicus (Rat) protein is Apoptosis-inducing factor 1, mitochondrial (Aifm1).